A 383-amino-acid polypeptide reads, in one-letter code: Protein FAM217B (383 aa).

6 disordered regions span residues 1–70, 89–115, 200–222, 232–251, 284–325, and 338–383; these read MNAG…CQGA, ADED…PPDL, KAKG…KSPG, SKPL…RKKA, QTLE…HIRV, and SCKA…YKLK. Residues 8-43 are compositionally biased toward polar residues; sequence NKVQHSKNSSGKRQSKSQVPHASSQPRSSLTAVTQP. Residues 44–56 show a composition bias toward basic and acidic residues; that stretch reads TEEKLKESISPEA. Over residues 374–383 the composition is skewed to polar residues; sequence GVKQNTYKLK.

This sequence belongs to the FAM217 family.

The polypeptide is Protein FAM217B (FAM217B) (Homo sapiens (Human)).